The chain runs to 503 residues: ATP synthase subunit alpha (503 aa).

ATP is bound at residue 170–177; the sequence is GDRKTGKT.

This sequence belongs to the ATPase alpha/beta chains family. In terms of assembly, F-type ATPases have 2 components, CF(1) - the catalytic core - and CF(0) - the membrane proton channel. CF(1) has five subunits: alpha(3), beta(3), gamma(1), delta(1), epsilon(1). CF(0) has four main subunits: a, b, b' and c.

The protein localises to the cellular thylakoid membrane. It carries out the reaction ATP + H2O + 4 H(+)(in) = ADP + phosphate + 5 H(+)(out). Its function is as follows. Produces ATP from ADP in the presence of a proton gradient across the membrane. The alpha chain is a regulatory subunit. The sequence is that of ATP synthase subunit alpha from Rippkaea orientalis (strain PCC 8801 / RF-1) (Cyanothece sp. (strain PCC 8801)).